The sequence spans 344 residues: DNA-directed RNA polymerase subunit alpha (344 aa).

The interval 1 to 238 (MKVIKTAPLI…KQLGVFGEKP (238 aa)) is alpha N-terminal domain (alpha-NTD). Residues 253 to 344 (DAKDLSAKIE…EKLEDKGGND (92 aa)) form an alpha C-terminal domain (alpha-CTD) region.

This sequence belongs to the RNA polymerase alpha chain family. Homodimer. The RNAP catalytic core consists of 2 alpha, 1 beta, 1 beta' and 1 omega subunit. When a sigma factor is associated with the core the holoenzyme is formed, which can initiate transcription.

It catalyses the reaction RNA(n) + a ribonucleoside 5'-triphosphate = RNA(n+1) + diphosphate. DNA-dependent RNA polymerase catalyzes the transcription of DNA into RNA using the four ribonucleoside triphosphates as substrates. In Helicobacter acinonychis (strain Sheeba), this protein is DNA-directed RNA polymerase subunit alpha.